Reading from the N-terminus, the 298-residue chain is Zinc import ATP-binding protein ZnuC (298 aa).

One can recognise an ABC transporter domain in the interval 17 to 232 (IELRNAGVYR…PEYVRLFGSR (216 aa)). Position 49 to 56 (49 to 56 (GQNGAGKS)) interacts with ATP. The disordered stretch occupies residues 273 to 298 (RGHCHVEDGHHHDHEHHHHEGGQPRA). Residues 276-298 (CHVEDGHHHDHEHHHHEGGQPRA) show a composition bias toward basic and acidic residues.

This sequence belongs to the ABC transporter superfamily. Zinc importer (TC 3.A.1.15.5) family. The complex is composed of two ATP-binding proteins (ZnuC), two transmembrane proteins (ZnuB) and a solute-binding protein (ZnuA).

It is found in the cell inner membrane. It carries out the reaction Zn(2+)(out) + ATP(in) + H2O(in) = Zn(2+)(in) + ADP(in) + phosphate(in) + H(+)(in). Part of the ABC transporter complex ZnuABC involved in zinc import. Responsible for energy coupling to the transport system. This Brucella melitensis biotype 1 (strain ATCC 23456 / CCUG 17765 / NCTC 10094 / 16M) protein is Zinc import ATP-binding protein ZnuC.